Here is a 116-residue protein sequence, read N- to C-terminus: MANHRIDRVGMEIKREVNDILQKKVRDPRVQGVTITEVQMQGDLSLAKVYYTIMSDLASDNQKAQTGLEKATGTIKRELGKQLTMYKIPDLVFEKDNSIAYGNKIDQLLRDLDNKS.

Belongs to the RbfA family. Monomer. Binds 30S ribosomal subunits, but not 50S ribosomal subunits or 70S ribosomes.

Its subcellular location is the cytoplasm. One of several proteins that assist in the late maturation steps of the functional core of the 30S ribosomal subunit. Associates with free 30S ribosomal subunits (but not with 30S subunits that are part of 70S ribosomes or polysomes). Required for efficient processing of 16S rRNA. May interact with the 5'-terminal helix region of 16S rRNA. The sequence is that of Ribosome-binding factor A from Streptococcus pyogenes serotype M3 (strain SSI-1).